The primary structure comprises 396 residues: Ornithine aminotransferase (396 aa).

N6-(pyridoxal phosphate)lysine is present on lysine 255.

Belongs to the class-III pyridoxal-phosphate-dependent aminotransferase family. OAT subfamily. The cofactor is pyridoxal 5'-phosphate.

It localises to the cytoplasm. It carries out the reaction a 2-oxocarboxylate + L-ornithine = L-glutamate 5-semialdehyde + an L-alpha-amino acid. The protein operates within amino-acid biosynthesis; L-proline biosynthesis; L-glutamate 5-semialdehyde from L-ornithine: step 1/1. Its function is as follows. Catalyzes the interconversion of ornithine to glutamate semialdehyde. The sequence is that of Ornithine aminotransferase from Bacillus anthracis (strain A0248).